The chain runs to 529 residues: Bifunctional purine biosynthesis protein PurH (529 aa).

In terms of domain architecture, MGS-like spans 1 to 148; the sequence is MQQRRPVRRA…KNHKDVAIVV (148 aa). K287 carries the post-translational modification N6-acetyllysine.

This sequence belongs to the PurH family.

It catalyses the reaction (6R)-10-formyltetrahydrofolate + 5-amino-1-(5-phospho-beta-D-ribosyl)imidazole-4-carboxamide = 5-formamido-1-(5-phospho-D-ribosyl)imidazole-4-carboxamide + (6S)-5,6,7,8-tetrahydrofolate. The catalysed reaction is IMP + H2O = 5-formamido-1-(5-phospho-D-ribosyl)imidazole-4-carboxamide. The protein operates within purine metabolism; IMP biosynthesis via de novo pathway; 5-formamido-1-(5-phospho-D-ribosyl)imidazole-4-carboxamide from 5-amino-1-(5-phospho-D-ribosyl)imidazole-4-carboxamide (10-formyl THF route): step 1/1. Its pathway is purine metabolism; IMP biosynthesis via de novo pathway; IMP from 5-formamido-1-(5-phospho-D-ribosyl)imidazole-4-carboxamide: step 1/1. The polypeptide is Bifunctional purine biosynthesis protein PurH (Escherichia coli (strain SMS-3-5 / SECEC)).